A 75-amino-acid polypeptide reads, in one-letter code: Veswaprin-c (75 aa).

The N-terminal stretch at 1-24 is a signal peptide; sequence MSSGGLLLLLGLLTLWAELTPVSS. Positions 27–72 constitute a WAP domain; sequence RPKKPGLCPPRPQKPPCVRECKNDWRCPGERKCCRYGCIYECRDPI. Disulfide bonds link C34–C60, C43–C64, C47–C59, and C53–C68.

Belongs to the venom waprin family. In terms of tissue distribution, expressed by the venom gland.

It localises to the secreted. In terms of biological role, damages membranes of susceptible bacteria. Has no hemolytic activity. Not toxic to mice. Does not inhibit the proteinases elastase and cathepsin G. This Demansia vestigiata (Lesser black whip snake) protein is Veswaprin-c.